Reading from the N-terminus, the 1088-residue chain is DEAD-box ATP-dependent RNA helicase 40 (1088 aa).

Disordered regions lie at residues 1-28 (MATTEDTPASAGPRYAPEDPTLPQPWKG), 47-178 (TQYE…QYAH), and 192-254 (TQGL…QNTH). A2 carries the post-translational modification N-acetylalanine. Residues 20–54 (PTLPQPWKGLIDGSTGILYYWNPETNVTQYERPSA) enclose the WW domain. Composition is skewed to low complexity over residues 87–137 (VGHV…SQSM), 148–171 (QTYQPTTQQQQQGMQNQHSQMPQQ), and 200–215 (QTPQGGPHGQQFPSQQ). Over residues 222–231 (PKREGDEFHG) the composition is skewed to basic and acidic residues. Polar residues predominate over residues 236–254 (GFSQPHLPNSERSPSQNTH). A Q motif motif is present at residues 435-463 (ITFESSGLPPEILRELLSAGFPSPTPIQA). In terms of domain architecture, Helicase ATP-binding spans 466–640 (WPIALQSRDI…SDLLVNPVQV (175 aa)). Residue 479–486 (AKTGSGKT) participates in ATP binding. The DEAD box motif lies at 588–591 (DEAD). The region spanning 669-813 (RLEQILRSQE…QVPPQVRDIA (145 aa)) is the Helicase C-terminal domain. 4 stretches are compositionally biased toward gly residues: residues 861 to 885 (EGGFGGREGGFGGREGGFGGRGGRF), 893 to 902 (GRGGNRGRGF), 911 to 920 (NVGGRGGFGR), and 932 to 944 (FGRGSGRGFGRGV). Residues 861 to 1033 (EGGFGGREGG…RRDRAPRVSG (173 aa)) are disordered. Residues 945-963 (GRFDNRRGRSRSRSPDLVR) are compositionally biased toward basic and acidic residues. A compositionally biased stretch (low complexity) spans 969–983 (SSYSRSRSRSGSYSR). Residues 984-1013 (SRSRSRSWSRSRSRSPRHSRDRGGHNRSRS) are compositionally biased toward basic residues.

This sequence belongs to the DEAD box helicase family. DDX5/DBP2 subfamily.

It is found in the nucleus. It carries out the reaction ATP + H2O = ADP + phosphate + H(+). Its function is as follows. ATP-dependent RNA helicase involved nonsense-mediated mRNA decay and ribosome biogenesis through rRNA processing. This is DEAD-box ATP-dependent RNA helicase 40 (RH40) from Arabidopsis thaliana (Mouse-ear cress).